The following is a 137-amino-acid chain: Actin-depolymerizing factor 12 (137 aa).

Ser6 carries the post-translational modification Phosphoserine. The ADF-H domain occupies Gly7–Leu137.

The protein belongs to the actin-binding proteins ADF family. Specifically expressed in pollen.

It is found in the cytoplasm. The protein localises to the cytoskeleton. In terms of biological role, actin-depolymerizing protein. Severs actin filaments (F-actin) and binds to actin monomers. This Arabidopsis thaliana (Mouse-ear cress) protein is Actin-depolymerizing factor 12.